Consider the following 241-residue polypeptide: Orotidine 5'-phosphate decarboxylase (241 aa).

Residues Asp15, Lys37, 64-73 (DLKYHDIPNT), Thr126, Arg187, Gln196, Gly216, and Arg217 each bind substrate. Lys66 functions as the Proton donor in the catalytic mechanism.

Belongs to the OMP decarboxylase family. Type 1 subfamily. As to quaternary structure, homodimer.

The catalysed reaction is orotidine 5'-phosphate + H(+) = UMP + CO2. Its pathway is pyrimidine metabolism; UMP biosynthesis via de novo pathway; UMP from orotate: step 2/2. Catalyzes the decarboxylation of orotidine 5'-monophosphate (OMP) to uridine 5'-monophosphate (UMP). The chain is Orotidine 5'-phosphate decarboxylase from Trichlorobacter lovleyi (strain ATCC BAA-1151 / DSM 17278 / SZ) (Geobacter lovleyi).